The chain runs to 296 residues: Acetylglutamate kinase (296 aa).

Residues 69-70 (GG), Arg91, and Asn193 contribute to the substrate site.

Belongs to the acetylglutamate kinase family. ArgB subfamily.

The protein localises to the cytoplasm. It catalyses the reaction N-acetyl-L-glutamate + ATP = N-acetyl-L-glutamyl 5-phosphate + ADP. Its pathway is amino-acid biosynthesis; L-arginine biosynthesis; N(2)-acetyl-L-ornithine from L-glutamate: step 2/4. Catalyzes the ATP-dependent phosphorylation of N-acetyl-L-glutamate. This chain is Acetylglutamate kinase, found in Albidiferax ferrireducens (strain ATCC BAA-621 / DSM 15236 / T118) (Rhodoferax ferrireducens).